A 78-amino-acid polypeptide reads, in one-letter code: Small ribosomal subunit protein bS21A (78 aa).

Basic and acidic residues predominate over residues 30–52 (MKARSAYEKPSEKRAREKGEAVR). Positions 30–78 (MKARSAYEKPSEKRAREKGEAVRRQRKLARKKLQREGLLPAPKKAVRAR) are disordered. Basic residues predominate over residues 53 to 62 (RQRKLARKKL).

Belongs to the bacterial ribosomal protein bS21 family.

The sequence is that of Small ribosomal subunit protein bS21A from Rhizobium etli (strain ATCC 51251 / DSM 11541 / JCM 21823 / NBRC 15573 / CFN 42).